The chain runs to 167 residues: Centrin-3 (167 aa).

4 consecutive EF-hand domains span residues 25 to 60 (EQKQ…LGFD), 61 to 96 (VKKA…WILE), 98 to 133 (DPHE…LGEN), and 134 to 167 (MSDE…TGDI). Phosphoserine is present on S135. Residues D147, D149, D151, E153, and E158 each coordinate Ca(2+).

This sequence belongs to the centrin family. In terms of assembly, monomer. Component of the nuclear pore complex (NPC)-associated TREX-2 complex (transcription and export complex 2), composed of at least GANP, 2 copies of ENY2, PCID2, SEM1/DSS1, and either centrin CETN2 or centrin CETN3. The TREX-2 complex also associates with ALYREF/ALY and with the nucleoporin NUP153. Interacts with USP49.

The protein resides in the cytoplasm. The protein localises to the cytoskeleton. It localises to the microtubule organizing center. It is found in the centrosome. Its subcellular location is the nucleus. The protein resides in the nucleolus. The protein localises to the nucleus envelope. It localises to the nuclear pore complex. It is found in the centriole. In terms of biological role, plays a fundamental role in microtubule-organizing center structure and function. Functionally, as a component of the TREX-2 complex, involved in the export of mRNAs to the cytoplasm through the nuclear pores. In Homo sapiens (Human), this protein is Centrin-3 (CETN3).